The primary structure comprises 612 residues: Threonine--tRNA ligase (612 aa).

A catalytic region spans residues 218-509; that stretch reads DHRKLGVELG…LSEHFGGNFP (292 aa). Residues C310, H361, and H486 each contribute to the Zn(2+) site.

Belongs to the class-II aminoacyl-tRNA synthetase family. As to quaternary structure, homodimer. Requires Zn(2+) as cofactor.

Its subcellular location is the cytoplasm. It catalyses the reaction tRNA(Thr) + L-threonine + ATP = L-threonyl-tRNA(Thr) + AMP + diphosphate + H(+). In terms of biological role, catalyzes the attachment of threonine to tRNA(Thr) in a two-step reaction: L-threonine is first activated by ATP to form Thr-AMP and then transferred to the acceptor end of tRNA(Thr). Also edits incorrectly charged L-seryl-tRNA(Thr). In Helicobacter pylori (strain G27), this protein is Threonine--tRNA ligase.